A 538-amino-acid chain; its full sequence is Chaperonin GroEL 1 (538 aa).

Residues 29-32 (TLGP), 86-90 (DGTTT), Gly413, and Asp494 each bind ATP.

It belongs to the chaperonin (HSP60) family. Forms a cylinder of 14 subunits composed of two heptameric rings stacked back-to-back. Interacts with the co-chaperonin GroES.

Its subcellular location is the cytoplasm. The enzyme catalyses ATP + H2O + a folded polypeptide = ADP + phosphate + an unfolded polypeptide.. In terms of biological role, together with its co-chaperonin GroES, plays an essential role in assisting protein folding. The GroEL-GroES system forms a nano-cage that allows encapsulation of the non-native substrate proteins and provides a physical environment optimized to promote and accelerate protein folding. This Mycolicibacterium paratuberculosis (strain ATCC BAA-968 / K-10) (Mycobacterium paratuberculosis) protein is Chaperonin GroEL 1.